A 234-amino-acid chain; its full sequence is Eosinophil granule major basic protein 2 (234 aa).

An N-terminal signal peptide occupies residues 1–15 (MKLLLLLALLVGAVS). Positions 16-115 (TRHLNVDTSS…VKFEGSPGCK (100 aa)) are cleaved as a propeptide — acidic. Residues 26 to 96 (LQSLQGEESL…SSELDMGPED (71 aa)) form a disordered region. A glycan (O-linked (Xyl...) (glycosaminoglycan) serine) is linked at Ser69. Residues 71–94 (SEDDPEEEEEEKEMESSSELDMGP) are compositionally biased toward acidic residues. In terms of domain architecture, C-type lectin spans 133 to 234 (SVCQRCFRGN…GVRRAFSCSY (102 aa)). Cystine bridges form between Cys135/Cys232 and Cys209/Cys224.

Nitrated.

It localises to the cytoplasmic granule. Functionally, MBP may play some important roles in the allergic reactions and inflammations, since MBP is capable of releasing histamine from mast cells and damaging the epithelial cells of bronchial tubes. Antiparasitic and antibiotic. This is Eosinophil granule major basic protein 2 (MBP2) from Cavia porcellus (Guinea pig).